Here is an 867-residue protein sequence, read N- to C-terminus: Leucine--tRNA ligase (867 aa).

The 'HIGH' region signature appears at 57-67 (PYPSGTLHMGH). Residues 308–327 (SQDERTSDDQPKRGVPTGAV) form a disordered region. The span at 309–319 (QDERTSDDQPK) shows a compositional bias: basic and acidic residues. The 'KMSKS' region signature appears at 631 to 635 (KMSKS). Lys-634 contacts ATP.

Belongs to the class-I aminoacyl-tRNA synthetase family.

The protein resides in the cytoplasm. It carries out the reaction tRNA(Leu) + L-leucine + ATP = L-leucyl-tRNA(Leu) + AMP + diphosphate. This chain is Leucine--tRNA ligase, found in Synechococcus sp. (strain CC9311).